The chain runs to 140 residues: Putative pre-16S rRNA nuclease (140 aa).

It belongs to the YqgF nuclease family.

The protein resides in the cytoplasm. Could be a nuclease involved in processing of the 5'-end of pre-16S rRNA. This chain is Putative pre-16S rRNA nuclease, found in Endomicrobium trichonymphae.